Consider the following 143-residue polypeptide: Large ribosomal subunit protein uL15 (143 aa).

A disordered region spans residues 1-52 (MKLNTLAPAAGSKSAPKRLGRGIGSGLGKTSGKGHKGQKARSGGYHKVGFEG). A compositionally biased stretch (gly residues) spans 21 to 31 (RGIGSGLGKTS).

Belongs to the universal ribosomal protein uL15 family. In terms of assembly, part of the 50S ribosomal subunit.

Binds to the 23S rRNA. The polypeptide is Large ribosomal subunit protein uL15 (Francisella tularensis subsp. mediasiatica (strain FSC147)).